Here is a 379-residue protein sequence, read N- to C-terminus: Elongation factor Ts, mitochondrial (379 aa).

Residues 1–45 (MALYRTARRPLQMMLFSRLGNPEQNYSSWARKDASQSAFGMFVRL) constitute a mitochondrion transit peptide.

The protein belongs to the EF-Ts family.

The protein resides in the mitochondrion. Its function is as follows. Associates with the EF-Tu.GDP complex and induces the exchange of GDP to GTP. It remains bound to the aminoacyl-tRNA.EF-Tu.GTP complex up to the GTP hydrolysis stage on the ribosome. In Ricinus communis (Castor bean), this protein is Elongation factor Ts, mitochondrial.